A 62-amino-acid polypeptide reads, in one-letter code: Large ribosomal subunit protein bL28 (62 aa).

This sequence belongs to the bacterial ribosomal protein bL28 family.

The chain is Large ribosomal subunit protein bL28 from Acholeplasma laidlawii (strain PG-8A).